The following is a 500-amino-acid chain: Cytosol aminopeptidase (500 aa).

Mn(2+) contacts are provided by Lys-265 and Asp-270. Residue Lys-277 is part of the active site. Residues Asp-288, Asp-347, and Glu-349 each contribute to the Mn(2+) site. The active site involves Arg-351.

This sequence belongs to the peptidase M17 family. It depends on Mn(2+) as a cofactor.

It is found in the cytoplasm. It catalyses the reaction Release of an N-terminal amino acid, Xaa-|-Yaa-, in which Xaa is preferably Leu, but may be other amino acids including Pro although not Arg or Lys, and Yaa may be Pro. Amino acid amides and methyl esters are also readily hydrolyzed, but rates on arylamides are exceedingly low.. The enzyme catalyses Release of an N-terminal amino acid, preferentially leucine, but not glutamic or aspartic acids.. Presumably involved in the processing and regular turnover of intracellular proteins. Catalyzes the removal of unsubstituted N-terminal amino acids from various peptides. The chain is Cytosol aminopeptidase (pepA) from Rickettsia prowazekii (strain Madrid E).